The sequence spans 477 residues: Aspartyl/glutamyl-tRNA(Asn/Gln) amidotransferase subunit B (477 aa).

This sequence belongs to the GatB/GatE family. GatB subfamily. In terms of assembly, heterotrimer of A, B and C subunits.

It catalyses the reaction L-glutamyl-tRNA(Gln) + L-glutamine + ATP + H2O = L-glutaminyl-tRNA(Gln) + L-glutamate + ADP + phosphate + H(+). The enzyme catalyses L-aspartyl-tRNA(Asn) + L-glutamine + ATP + H2O = L-asparaginyl-tRNA(Asn) + L-glutamate + ADP + phosphate + 2 H(+). Functionally, allows the formation of correctly charged Asn-tRNA(Asn) or Gln-tRNA(Gln) through the transamidation of misacylated Asp-tRNA(Asn) or Glu-tRNA(Gln) in organisms which lack either or both of asparaginyl-tRNA or glutaminyl-tRNA synthetases. The reaction takes place in the presence of glutamine and ATP through an activated phospho-Asp-tRNA(Asn) or phospho-Glu-tRNA(Gln). This Coxiella burnetii (strain RSA 493 / Nine Mile phase I) protein is Aspartyl/glutamyl-tRNA(Asn/Gln) amidotransferase subunit B.